Consider the following 1102-residue polypeptide: Trafficking protein particle complex II-specific subunit 130 (1102 aa).

The protein belongs to the TMEM1 family. Part of the multisubunit TRAPP (transport protein particle) II complex composed of BET3, BET5, TRS20, TRS23, TRS31, TRS33, TRS65, TRS120 and TRS130. Interacts with YPT31 and YPT32.

Its subcellular location is the golgi apparatus. Its function is as follows. Specific subunit of the TRAPP II complex, a highly conserved vesicle tethering complex that functions in the late Golgi as a guanine nucleotide exchange factor (GEF) for the Golgi YPT1 GTPase. TRS130 plays a role in the YPT GEF activity of TRAPP II in concert with the two other TRAPP II-specific subunits TRS65 and TRS120. Required for both the cytoplasm-to-vacuole targeting (Cvt) pathway and starvation-induced autophagy through its role in ATG8 and ATG9 trafficking. In Saccharomyces cerevisiae (strain ATCC 204508 / S288c) (Baker's yeast), this protein is Trafficking protein particle complex II-specific subunit 130 (TRS130).